A 396-amino-acid chain; its full sequence is Elongation factor Tu 1 (396 aa).

One can recognise a tr-type G domain in the interval 10–206; it reads KPHVNVGTIG…QIDSYIPEPE (197 aa). Residues 19–26 are G1; that stretch reads GHIDHGKT. 19-26 lines the GTP pocket; it reads GHIDHGKT. Position 26 (Thr-26) interacts with Mg(2+). A G2 region spans residues 60-64; sequence GITIA. Residues 81-84 form a G3 region; it reads DCPG. GTP-binding positions include 81–85 and 136–139; these read DCPGH and NKCD. The interval 136–139 is G4; sequence NKCD. The segment at 174–176 is G5; it reads SAL.

It belongs to the TRAFAC class translation factor GTPase superfamily. Classic translation factor GTPase family. EF-Tu/EF-1A subfamily. In terms of assembly, monomer.

It is found in the cytoplasm. It carries out the reaction GTP + H2O = GDP + phosphate + H(+). GTP hydrolase that promotes the GTP-dependent binding of aminoacyl-tRNA to the A-site of ribosomes during protein biosynthesis. The chain is Elongation factor Tu 1 from Desulfotalea psychrophila (strain LSv54 / DSM 12343).